The sequence spans 359 residues: Alpha-ketoglutarate-dependent dioxygenase cnsM (359 aa).

Residue H120 coordinates substrate. H158 and D160 together coordinate Fe cation. T186 contacts 2-oxoglutarate. H311 lines the Fe cation pocket. 2-oxoglutarate-binding residues include R323 and R327. Substrate is bound at residue R327.

This sequence belongs to the TfdA dioxygenase family. Fe(2+) serves as cofactor.

The protein operates within alkaloid biosynthesis. Functionally, alpha-ketoglutarate-dependent dioxygenase; part of the gene cluster that mediates the biosynthesis of communesins, a prominent class of indole alkaloids with great potential as pharmaceuticals. Communesins are biosynthesized by the coupling of tryptamine and aurantioclavine, two building blocks derived from L-tryptophan. The L-tryptophan decarboxylase cnsB converts L-tryptophan to tryptamine, whereas the tryptophan dimethylallyltransferase cnsF converts L-tryptophan to 4-dimethylallyl tryptophan which is further transformed to aurantioclavine by the aurantioclavine synthase cnsA, probably aided by the catalase cnsD. The cytochrome P450 monooxygenase cnsC catalyzes the heterodimeric coupling between the two different indole moieties, tryptamine and aurantioclavine, to construct vicinal quaternary stereocenters and yield the heptacyclic communesin scaffold. The O-methyltransferase cnsE then methylates the communesin scaffold to produce communesin K, the simplest characterized communesin that contains the heptacyclic core. The dioxygenase cnsJ converts communesin K into communesin I. Acylation to introduce the hexadienyl group at position N16 of communesin I by the acyltransferase cnsK leads to the production of communesin B. The hexadienyl group is produced by the highly reducing polyketide synthase cnsI, before being hydrolytically removed from cnsI by the serine hydrolase cnsH, converted into hexadienyl-CoA by the CoA ligase cnsG, and then transferred to communesin I by cnsK. Surprisingly, cnsK may also be a promiscuous acyltransferase that can tolerate a range of acyl groups, including acetyl-, propionyl-, and butyryl-CoA, which lead to communesins A, G and H respectively. The roles of the alpha-ketoglutarate-dependent dioxygenases cnsM and cnsP have still to be determined. The chain is Alpha-ketoglutarate-dependent dioxygenase cnsM from Penicillium expansum (Blue mold rot fungus).